A 276-amino-acid polypeptide reads, in one-letter code: Nickel import system permease protein NikC (276 aa).

5 helical membrane passes run 10 to 30, 73 to 93, 108 to 128, 186 to 206, and 238 to 258; these read LIFF…FFVS, LFVT…LGLF, FIDV…ASFF, IIPA…LYIS, and IMLI…NLTG. The ABC transmembrane type-1 domain maps to 69–258; the sequence is ARSTLFVTVL…ITILIFNLTG (190 aa).

It belongs to the binding-protein-dependent transport system permease family. OppBC subfamily. As to quaternary structure, the complex is composed of two ATP-binding proteins (NikD and NikE), two transmembrane proteins (NikB and NikC) and a solute-binding protein (NikA).

It is found in the cell membrane. Its function is as follows. Part of the ABC transporter complex NikABCDE (Opp2) involved in nickel import. Probably responsible for the translocation of the substrate across the membrane. The polypeptide is Nickel import system permease protein NikC (Staphylococcus aureus (strain USA300)).